Reading from the N-terminus, the 445-residue chain is Glutamyl-tRNA reductase (445 aa).

Substrate-binding positions include 49–52, Ser109, 114–116, and Gln120; these read TCNR and ETQ. Cys50 functions as the Nucleophile in the catalytic mechanism. Position 189–194 (189–194) interacts with NADP(+); it reads GAGEMS.

Belongs to the glutamyl-tRNA reductase family. In terms of assembly, homodimer.

The enzyme catalyses (S)-4-amino-5-oxopentanoate + tRNA(Glu) + NADP(+) = L-glutamyl-tRNA(Glu) + NADPH + H(+). It functions in the pathway porphyrin-containing compound metabolism; protoporphyrin-IX biosynthesis; 5-aminolevulinate from L-glutamyl-tRNA(Glu): step 1/2. Catalyzes the NADPH-dependent reduction of glutamyl-tRNA(Glu) to glutamate 1-semialdehyde (GSA). The sequence is that of Glutamyl-tRNA reductase from Staphylococcus carnosus (strain TM300).